Here is a 344-residue protein sequence, read N- to C-terminus: Cysteine proteinase 5 (344 aa).

An N-terminal signal peptide occupies residues 1–17 (MKVLSFLCVLLVSVATA). The propeptide at 18 to 111 (KQQFSELQYR…TQEEKVFTTS (94 aa)) is activation peptide. 3 cysteine pairs are disulfide-bonded: cysteine 133–cysteine 174, cysteine 167–cysteine 207, and cysteine 265–cysteine 333. Cysteine 136 is a catalytic residue. The active site involves histidine 272. Asparagine 297 carries an N-linked (GlcNAc...) asparagine glycan. Asparagine 311 is a catalytic residue.

Belongs to the peptidase C1 family. Post-translationally, glycosylated; contains GlcNAc-alpha-1-P-Ser residues.

It localises to the lysosome. The chain is Cysteine proteinase 5 (cprE) from Dictyostelium discoideum (Social amoeba).